We begin with the raw amino-acid sequence, 995 residues long: tRNA wybutosine-synthesizing protein 2/3/4 (995 aa).

Residues 1 to 212 (MDFEKRKAAT…GFSVALASNG (212 aa)) are tRNA wybutosine-synthesizing protein 3 homolog. Kelch repeat units lie at residues 284-335 (EVIV…MVGD), 336-386 (FMFV…SVGT), 387-436 (KVYI…AYGS), 437-486 (QSFM…VYKH), and 488-535 (IGII…SILG). Residues 661–995 (ERSEENNLTK…RHLVADVRCR (335 aa)) form a tRNA wybutosine-synthesizing protein 2 homolog region. S-adenosyl-L-methionine-binding positions include Lys-828 and 896–897 (DN).

It in the C-terminal section; belongs to the class I-like SAM-binding methyltransferase superfamily. TRM5/TYW2 family. The protein in the N-terminal section; belongs to the TYW3 family.

The enzyme catalyses 4-demethyl-7-[(3S)-3-amino-3-carboxypropyl]wyosine(37) in tRNA(Phe) + S-adenosyl-L-methionine = 7-[(3S)-3-amino-3-carboxypropyl]wyosine(37) in tRNA(Phe) + S-adenosyl-L-homocysteine + H(+). The catalysed reaction is 4-demethylwyosine(37) in tRNA(Phe) + S-adenosyl-L-methionine = 4-demethyl-7-[(3S)-3-amino-3-carboxypropyl]wyosine(37) in tRNA(Phe) + S-methyl-5'-thioadenosine + H(+). It functions in the pathway tRNA modification; wybutosine-tRNA(Phe) biosynthesis. In terms of biological role, S-adenosyl-L-methionine-dependent transferase that acts as a component of the wybutosine biosynthesis pathway. Wybutosine is a hyper modified guanosine with a tricyclic base found at the 3'-position adjacent to the anticodon of eukaryotic phenylalanine tRNA. The polypeptide is tRNA wybutosine-synthesizing protein 2/3/4 (Arabidopsis thaliana (Mouse-ear cress)).